The sequence spans 63 residues: Protein D-63 (63 aa).

As to quaternary structure, homodimer.

This protein may be involved in virus assembly. In Saccharolobus solfataricus (Sulfolobus solfataricus), this protein is Protein D-63.